The following is a 212-amino-acid chain: External core antigen (212 aa).

The first 19 residues, 1–19 (MQLFHLCLIISCSCPTVQA), serve as a signal peptide directing secretion. The segment at 25–27 (GWL) is HBEAG. The tract at residues 165-212 (NAPILSTLPETTVVRRRGRSPRRRTPSPRRRRSQSPRRRRSQSRESQC) is disordered. Residues 178–205 (VRRRGRSPRRRTPSPRRRRSQSPRRRRS) are compositionally biased toward basic residues. One copy of the 1; half-length repeat lies at 184–190 (SPRRRTP). Residues 184–206 (SPRRRTPSPRRRRSQSPRRRRSQ) form a 3 X 8 AA repeats of S-P-R-R-R-R-S-Q region. Positions 184 to 212 (SPRRRTPSPRRRRSQSPRRRRSQSRESQC) are excised as a propeptide. Repeat copies occupy residues 191 to 198 (SPRRRRSQ) and 199 to 206 (SPRRRRSQ).

The protein belongs to the orthohepadnavirus precore antigen family. Homodimerizes. Phosphorylated. Post-translationally, cleaved by host furin.

The protein localises to the secreted. It is found in the host nucleus. Functionally, may regulate immune response to the intracellular capsid in acting as a T-cell tolerogen, by having an immunoregulatory effect which prevents destruction of infected cells by cytotoxic T-cells. This immune regulation may predispose to chronicity during perinatal infections and prevent severe liver injury during adult infections. The chain is External core antigen from Hepatitis B virus genotype B2 (isolate Indonesia/pIDW420/1988) (HBV-B).